Here is a 439-residue protein sequence, read N- to C-terminus: Enolase (439 aa).

Substrate contacts are provided by His-160 and Glu-169. Glu-212 functions as the Proton donor in the catalytic mechanism. Mg(2+)-binding residues include Asp-247, Glu-296, and Asp-323. Positions 296 and 323 each coordinate substrate. Lys-348 (proton acceptor) is an active-site residue. Substrate-binding positions include Ser-375–Ser-378 and Lys-399.

The protein belongs to the enolase family. As to quaternary structure, homodimer. Requires Mg(2+) as cofactor.

The protein resides in the cytoplasm. The catalysed reaction is (2R)-2-phosphoglycerate = phosphoenolpyruvate + H2O. Its pathway is carbohydrate degradation; glycolysis; pyruvate from D-glyceraldehyde 3-phosphate: step 4/5. This Rhodotorula mucilaginosa (Yeast) protein is Enolase (ENO).